Consider the following 102-residue polypeptide: Small ribosomal subunit protein uS10 (102 aa).

Belongs to the universal ribosomal protein uS10 family. As to quaternary structure, part of the 30S ribosomal subunit.

In terms of biological role, involved in the binding of tRNA to the ribosomes. The protein is Small ribosomal subunit protein uS10 of Ligilactobacillus salivarius (strain UCC118) (Lactobacillus salivarius).